Reading from the N-terminus, the 886-residue chain is Valine--tRNA ligase (886 aa).

The 'HIGH' region signature appears at 53–63; the sequence is PNVTGSLHMGH. Positions 540 to 544 match the 'KMSKS' region motif; it reads KMSKS. Position 543 (Lys543) interacts with ATP. Residues 820 to 851 adopt a coiled-coil conformation; that stretch reads IDVAAERRRMEKDLAAAQKELASTAAKLANAD.

It belongs to the class-I aminoacyl-tRNA synthetase family. ValS type 1 subfamily. Monomer.

The protein resides in the cytoplasm. The catalysed reaction is tRNA(Val) + L-valine + ATP = L-valyl-tRNA(Val) + AMP + diphosphate. Catalyzes the attachment of valine to tRNA(Val). As ValRS can inadvertently accommodate and process structurally similar amino acids such as threonine, to avoid such errors, it has a 'posttransfer' editing activity that hydrolyzes mischarged Thr-tRNA(Val) in a tRNA-dependent manner. This Mycobacterium leprae (strain TN) protein is Valine--tRNA ligase.